Reading from the N-terminus, the 262-residue chain is Acyl-[acyl-carrier-protein]--UDP-N-acetylglucosamine O-acyltransferase (262 aa).

Belongs to the transferase hexapeptide repeat family. LpxA subfamily. Homotrimer.

It is found in the cytoplasm. The enzyme catalyses a (3R)-hydroxyacyl-[ACP] + UDP-N-acetyl-alpha-D-glucosamine = a UDP-3-O-[(3R)-3-hydroxyacyl]-N-acetyl-alpha-D-glucosamine + holo-[ACP]. It participates in glycolipid biosynthesis; lipid IV(A) biosynthesis; lipid IV(A) from (3R)-3-hydroxytetradecanoyl-[acyl-carrier-protein] and UDP-N-acetyl-alpha-D-glucosamine: step 1/6. In terms of biological role, involved in the biosynthesis of lipid A, a phosphorylated glycolipid that anchors the lipopolysaccharide to the outer membrane of the cell. The protein is Acyl-[acyl-carrier-protein]--UDP-N-acetylglucosamine O-acyltransferase of Histophilus somni (strain 129Pt) (Haemophilus somnus).